The following is a 161-amino-acid chain: uncharacterized protein (161 aa).

The helical transmembrane segment at 16 to 36 (KLGLVVAIFFFMMGTTVVVLY) threads the bilayer.

The protein localises to the membrane. This is an uncharacterized protein from Encephalitozoon cuniculi (strain GB-M1) (Microsporidian parasite).